The primary structure comprises 886 residues: Cadherin-1 (886 aa).

Residues 1–23 form the signal peptide; that stretch reads MGARCRSFSALLLLLQVSSWLCQ. Positions 24–158 are excised as a propeptide; the sequence is QPESESDSCR…FHQGLRRQKR (135 aa). Topologically, residues 24–713 are extracellular; that stretch reads QPESESDSCR…SLEAGLQVPA (690 aa). Cadherin domains are found at residues 159–266, 267–379, 380–490, 491–597, and 598–701; these read DWVI…RPEF, IQEV…APIF, NPST…APIF, VPAE…DNAP, and IPEP…NCMK. Asp261 provides a ligand contact to Ca(2+). Ser284 and Ser289 each carry an O-linked (Man...) serine glycan. Position 292 (Asp292) interacts with Ca(2+). 4 O-linked (Man...) threonine glycosylation sites follow: Thr362, Thr474, Thr476, and Thr513. Asn562 carries N-linked (GlcNAc...) asparagine glycosylation. Thr580, Thr582, and Thr584 each carry an O-linked (Man...) threonine glycan. N-linked (GlcNAc...) asparagine glycosylation is present at Asn641. Residues 714–734 traverse the membrane as a helical segment; sequence ILGILGGILALLILILLLLLF. Residues 735-886 are Cytoplasmic-facing; it reads LRRRTVVKEP…ADMYGGGEED (152 aa). Residues 751–771 form a disordered region; the sequence is DTRDNVYYYDEEGGGEEDQDF. Phosphotyrosine; by SRC occurs at positions 757, 758, and 759. Residues 759-771 show a composition bias toward acidic residues; that stretch reads YDEEGGGEEDQDF. A required for binding CTNND1 and PSEN1 region spans residues 762–773; sequence EGGGEEDQDFDL. Phosphoserine occurs at positions 774, 797, 842, 844, and 850. A required for binding alpha, beta and region spans residues 815-886; the sequence is IDENLKAADS…ADMYGGGEED (72 aa).

As to quaternary structure, homodimer; disulfide-linked. Component of an E-cadherin/ catenin adhesion complex composed of at least E-cadherin/CDH1, beta-catenin/CTNNB1 or gamma-catenin/JUP, and potentially alpha-catenin/CTNNA1; the complex is located to adherens junctions. Found in a complex composed of CDH1, RAP1A and PKP3; PKP3 acts as a scaffold protein within the complex, the complex is required for CDH1 localization to mature desmosome cell junctions. Interacts with the TRPV4 and CTNNB1 complex. Interacts with CTNND1. The stable association of CTNNA1 is controversial as CTNNA1 was shown not to bind to F-actin when assembled in the complex. Alternatively, the CTNNA1-containing complex may be linked to F-actin by other proteins such as LIMA1. Interaction with PSEN1, cleaves CDH1 resulting in the disassociation of cadherin-based adherens junctions (CAJs). Interacts with AJAP1 and DLGAP5. Interacts with TBC1D2. Interacts with LIMA1. Interacts with CAV1. Interacts with PIP5K1C. Interacts with DDR1; this stabilizes CDH1 at the cell surface and inhibits its internalization. Interacts with RAPGEF2. Interacts with RAB8B. Interacts with KLRG1. Forms a ternary complex composed of ADAM10, CADH1 and EPHA4; within the complex, CADH1 is cleaved by ADAM10 which disrupts adherens junctions. Interacts with SPEF1. Interacts with CTNNB1 and PKP2. Interacts with AMOTL2; the interaction may facilitate binding of radial actin fibers to cell junction complexes. Interacts with DSG3; the interaction is required for CDH1 localization to developing adherens junctions. During apoptosis or with calcium influx, cleaved by a membrane-bound metalloproteinase (ADAM10), PS1/gamma-secretase and caspase-3. Processing by the metalloproteinase, induced by calcium influx, causes disruption of cell-cell adhesion and the subsequent release of beta-catenin into the cytoplasm. The residual membrane-tethered cleavage product is rapidly degraded via an intracellular proteolytic pathway. Cleavage by caspase-3 releases the cytoplasmic tail resulting in disintegration of the actin microfilament system. The gamma-secretase-mediated cleavage promotes disassembly of adherens junctions. During development of the cochlear organ of Corti, cleavage by ADAM10 at adherens junctions promotes pillar cell separation. Post-translationally, N-glycosylation at Asn-641 is essential for expression, folding and trafficking. Addition of bisecting N-acetylglucosamine by MGAT3 modulates its cell membrane location. In terms of processing, ubiquitinated by a SCF complex containing SKP2, which requires prior phosphorylation by CK1/CSNK1A1. Ubiquitinated by CBLL1/HAKAI, requires prior phosphorylation at Tyr-758. O-glycosylated. O-manosylated by TMTC1, TMTC2, TMTC3 or TMTC4. Ser-289 and Thr-513 are O-manosylated by TMTC2 or TMTC4 but not TMTC1 or TMTC3.

The protein localises to the cell junction. It localises to the adherens junction. Its subcellular location is the cell membrane. It is found in the endosome. The protein resides in the golgi apparatus. The protein localises to the trans-Golgi network. It localises to the cytoplasm. Its subcellular location is the desmosome. Its function is as follows. Cadherins are calcium-dependent cell adhesion proteins. They preferentially interact with themselves in a homophilic manner in connecting cells; cadherins may thus contribute to the sorting of heterogeneous cell types. CDH1 is involved in mechanisms regulating cell-cell adhesions, mobility and proliferation of epithelial cells. Promotes organization of radial actin fiber structure and cellular response to contractile forces, via its interaction with AMOTL2 which facilitates anchoring of radial actin fibers to CDH1 junction complexes at the cell membrane. Plays a role in the early stages of desmosome cell-cell junction formation via facilitating the recruitment of DSG2 and DSP to desmosome plaques. Has a potent invasive suppressor role. It is a ligand for integrin alpha-E/beta-7. Functionally, E-Cad/CTF2 promotes non-amyloidogenic degradation of Abeta precursors. Has a strong inhibitory effect on APP C99 and C83 production. This is Cadherin-1 (Cdh1) from Rattus norvegicus (Rat).